An 87-amino-acid chain; its full sequence is U3-theraphotoxin-Hhn1f (87 aa).

The first 24 residues, 1-24 (MVNMKASMFLTSAGLVLLFVVCYA), serve as a signal peptide directing secretion. Positions 25-52 (SESEEKEFPKEMLSSIFAVDNDFKQEER) are excised as a propeptide. 3 disulfides stabilise this stretch: cysteine 54–cysteine 67, cysteine 61–cysteine 72, and cysteine 66–cysteine 79.

It belongs to the neurotoxin 10 (Hwtx-1) family. 51 (Hntx-8) subfamily. Hntx-8 sub-subfamily. As to expression, expressed by the venom gland.

It is found in the secreted. Its function is as follows. Ion channel inhibitor. This Cyriopagopus hainanus (Chinese bird spider) protein is U3-theraphotoxin-Hhn1f.